A 327-amino-acid chain; its full sequence is WRKY transcription factor WRKY76 (327 aa).

Residues 56–76 adopt a coiled-coil conformation; sequence AKIVEAKVTQMSEENRRLTEV. A disordered region spans residues 87–135; it reads RLGLDGSASPPRPVSPLSGKKRSRESMETANSCDANSNRHQGGDADHAE. Residues 106–112 carry the Nuclear localization signal motif; that stretch reads KKRSRES. The span at 114–126 shows a compositional bias: polar residues; sequence ETANSCDANSNRH. A DNA-binding region (WRKY) is located at residues 160 to 226; sequence DTSLVVKDGY…YEGEHNHPHP (67 aa).

It belongs to the WRKY group II-a family.

It localises to the nucleus. Its function is as follows. Transcription repressor. Interacts specifically with the W box (5'-(T)TGAC[CT]-3'), a frequently occurring elicitor-responsive cis-acting element. Regulates, probably indirectly, the activation of defense-related genes during defense response. Modulates plant innate immunity against X.oryzae pv. oryzae (Xoo). In Oryza sativa subsp. japonica (Rice), this protein is WRKY transcription factor WRKY76.